A 401-amino-acid polypeptide reads, in one-letter code: Imidazolonepropionase (401 aa).

Residues H70 and H72 each coordinate Fe(3+). The Zn(2+) site is built by H70 and H72. 4-imidazolone-5-propanoate-binding residues include R79, Y142, and H175. Y142 is an N-formimidoyl-L-glutamate binding site. H240 contacts Fe(3+). H240 lines the Zn(2+) pocket. Residue Q243 participates in 4-imidazolone-5-propanoate binding. A Fe(3+)-binding site is contributed by D315. D315 lines the Zn(2+) pocket. The N-formimidoyl-L-glutamate site is built by N317 and G319. T320 lines the 4-imidazolone-5-propanoate pocket.

This sequence belongs to the metallo-dependent hydrolases superfamily. HutI family. Zn(2+) serves as cofactor. The cofactor is Fe(3+).

It is found in the cytoplasm. It catalyses the reaction 4-imidazolone-5-propanoate + H2O = N-formimidoyl-L-glutamate. It participates in amino-acid degradation; L-histidine degradation into L-glutamate; N-formimidoyl-L-glutamate from L-histidine: step 3/3. Catalyzes the hydrolytic cleavage of the carbon-nitrogen bond in imidazolone-5-propanoate to yield N-formimidoyl-L-glutamate. It is the third step in the universal histidine degradation pathway. This is Imidazolonepropionase from Caulobacter sp. (strain K31).